Here is a 200-residue protein sequence, read N- to C-terminus: ATP synthase subunit delta', mitochondrial (200 aa).

A mitochondrion-targeting transit peptide spans 1-21 (MFRHSSRLLARATTMGWRRPF).

It belongs to the ATPase epsilon chain family. F-type ATPases have 2 components, CF(1) - the catalytic core - and CF(0) - the membrane proton channel. CF(1) has five subunits: alpha(3), beta(3), gamma(1), delta(1), epsilon(1). CF(0) has three main subunits: a, b and c.

It is found in the mitochondrion. Its subcellular location is the mitochondrion inner membrane. In terms of biological role, mitochondrial membrane ATP synthase (F(1)F(0) ATP synthase or Complex V) produces ATP from ADP in the presence of a proton gradient across the membrane which is generated by electron transport complexes of the respiratory chain. F-type ATPases consist of two structural domains, F(1) - containing the extramembraneous catalytic core, and F(0) - containing the membrane proton channel, linked together by a central stalk and a peripheral stalk. During catalysis, ATP turnover in the catalytic domain of F(1) is coupled via a rotary mechanism of the central stalk subunits to proton translocation. Part of the complex F(1) domain and of the central stalk which is part of the complex rotary element. Rotation of the central stalk against the surrounding alpha(3)beta(3) subunits leads to hydrolysis of ATP in three separate catalytic sites on the beta subunits. This Ipomoea batatas (Sweet potato) protein is ATP synthase subunit delta', mitochondrial.